Consider the following 218-residue polypeptide: uncharacterized protein (218 aa).

7 helical membrane passes run 9-29 (LLVIVGIDLILGGDNAVVIAM), 42-62 (AIILGTFIAVAMRIGLTSAAV), 67-87 (IPFLQCAGGIFLLYLGYQLLI), 107-127 (TIVLADLFMSLDNVIAVAGAS), 134-154 (VVIGLCVSVPVIIWGSKLIHI), 159-179 (IPLLIYAGSGLLAYTGGEMIV), and 192-212 (GTVETLLPILTVAFVILASIY).

It belongs to the TerC family.

The protein localises to the cell membrane. This is an uncharacterized protein from Bacillus subtilis (strain 168).